The following is a 63-amino-acid chain: Large ribosomal subunit protein uL30 (63 aa).

It belongs to the universal ribosomal protein uL30 family. As to quaternary structure, part of the 50S ribosomal subunit.

This is Large ribosomal subunit protein uL30 from Hahella chejuensis (strain KCTC 2396).